We begin with the raw amino-acid sequence, 333 residues long: MAQDRECLCSAGFQRGDYTQGNTDRSTAAANSRPPAGQRGAEEPSSGGAGTPPPAAVLPTMPDEATENAGSTSARVSSFFIEDLLGTEGGGGTRRAAAGGGGGRGAPRCGPHSPLRLGASGCPLRDAAVGWYRRAFLGCASPDTSDRDSPELPEDTERAGGGGRAAARGPAGGRQSSGGREEEEERGEEAGEAEQRAAGRKKKTRTVFSRSQVFQLESTFDVKRYLSSSERAGLAASLHLTETQVKIWFQNRRNKWKRQLAADLEAANLSHAAQRIVRVPILYHENSPASALGFGLPHMSPPLVGFSGGVSYPLGTFPAASLPFLRSQMTGLV.

3 disordered regions span residues 1–74 (MAQD…STSA), 86–109 (GTEG…APRC), and 139–204 (CASP…KKKT). Polar residues predominate over residues 17 to 30 (DYTQGNTDRSTAAA). The segment covering 87–105 (TEGGGGTRRAAAGGGGGRG) has biased composition (gly residues). Basic and acidic residues predominate over residues 144–158 (TSDRDSPELPEDTER). Gly residues predominate over residues 159–176 (AGGGGRAAARGPAGGRQS). Positions 181 to 192 (EEEEERGEEAGE) are enriched in acidic residues. The segment at residues 201 to 260 (KKKTRTVFSRSQVFQLESTFDVKRYLSSSERAGLAASLHLTETQVKIWFQNRRNKWKRQL) is a DNA-binding region (homeobox). The short motif at 261 to 271 (AADLEAANLSH) is the HMX family specific domain 1 element.

This sequence belongs to the HMX homeobox family.

The protein resides in the nucleus. DNA-binding protein that binds to the 5'-CAAG-3' core sequence. May function as a transcriptional repressor. Seems to act as a transcriptional antagonist of NKX2-5. May play an important role in the development of craniofacial structures such as the eye and ear. This chain is Homeobox protein HMX1 (HMX1), found in Gallus gallus (Chicken).